Reading from the N-terminus, the 275-residue chain is NH(3)-dependent NAD(+) synthetase (275 aa).

Position 47 to 54 (47 to 54) interacts with ATP; that stretch reads GISGGQDS. Asp-53 lines the Mg(2+) pocket. Position 141 (Arg-141) interacts with deamido-NAD(+). An ATP-binding site is contributed by Thr-161. Glu-166 lines the Mg(2+) pocket. The deamido-NAD(+) site is built by Lys-174 and Asp-181. Positions 190 and 212 each coordinate ATP. Residue 261–262 participates in deamido-NAD(+) binding; it reads HK.

This sequence belongs to the NAD synthetase family. As to quaternary structure, homodimer.

It carries out the reaction deamido-NAD(+) + NH4(+) + ATP = AMP + diphosphate + NAD(+) + H(+). It participates in cofactor biosynthesis; NAD(+) biosynthesis; NAD(+) from deamido-NAD(+) (ammonia route): step 1/1. Its function is as follows. Catalyzes the ATP-dependent amidation of deamido-NAD to form NAD. Uses ammonia as a nitrogen source. This Lacticaseibacillus casei (strain BL23) (Lactobacillus casei) protein is NH(3)-dependent NAD(+) synthetase.